Reading from the N-terminus, the 159-residue chain is 2-C-methyl-D-erythritol 2,4-cyclodiphosphate synthase (159 aa).

A divalent metal cation-binding residues include Asp9 and His11. Residues 9-11 (DVH) and 35-36 (HS) contribute to the 4-CDP-2-C-methyl-D-erythritol 2-phosphate site. An a divalent metal cation-binding site is contributed by His43. 4-CDP-2-C-methyl-D-erythritol 2-phosphate-binding positions include 57–59 (DLG), 62–66 (FPDTD), 133–136 (TTTE), Phe140, and Arg143.

This sequence belongs to the IspF family. In terms of assembly, homotrimer. A divalent metal cation is required as a cofactor.

It carries out the reaction 4-CDP-2-C-methyl-D-erythritol 2-phosphate = 2-C-methyl-D-erythritol 2,4-cyclic diphosphate + CMP. It functions in the pathway isoprenoid biosynthesis; isopentenyl diphosphate biosynthesis via DXP pathway; isopentenyl diphosphate from 1-deoxy-D-xylulose 5-phosphate: step 4/6. Functionally, involved in the biosynthesis of isopentenyl diphosphate (IPP) and dimethylallyl diphosphate (DMAPP), two major building blocks of isoprenoid compounds. Catalyzes the conversion of 4-diphosphocytidyl-2-C-methyl-D-erythritol 2-phosphate (CDP-ME2P) to 2-C-methyl-D-erythritol 2,4-cyclodiphosphate (ME-CPP) with a corresponding release of cytidine 5-monophosphate (CMP). This Shouchella clausii (strain KSM-K16) (Alkalihalobacillus clausii) protein is 2-C-methyl-D-erythritol 2,4-cyclodiphosphate synthase.